We begin with the raw amino-acid sequence, 154 residues long: Myoglobin (154 aa).

Positions 2 to 148 (GLSDGEWQLV…FRKDMASNYK (147 aa)) constitute a Globin domain. At S4 the chain carries Phosphoserine. H65 serves as a coordination point for nitrite. H65 is a binding site for O2. Position 68 is a phosphothreonine (T68). H94 contributes to the heme b binding site.

Belongs to the globin family. As to quaternary structure, monomeric.

Its subcellular location is the cytoplasm. It localises to the sarcoplasm. The enzyme catalyses Fe(III)-heme b-[protein] + nitric oxide + H2O = Fe(II)-heme b-[protein] + nitrite + 2 H(+). The catalysed reaction is H2O2 + AH2 = A + 2 H2O. Monomeric heme protein which primary function is to store oxygen and facilitate its diffusion within muscle tissues. Reversibly binds oxygen through a pentacoordinated heme iron and enables its timely and efficient release as needed during periods of heightened demand. Depending on the oxidative conditions of tissues and cells, and in addition to its ability to bind oxygen, it also has a nitrite reductase activity whereby it regulates the production of bioactive nitric oxide. Under stress conditions, like hypoxia and anoxia, it also protects cells against reactive oxygen species thanks to its pseudoperoxidase activity. This chain is Myoglobin (MB), found in Gorilla gorilla beringei (Mountain gorilla).